We begin with the raw amino-acid sequence, 4760 residues long: Nonribosomal peptide synthetase cm3A (4760 aa).

Residues M1–T12 are compositionally biased toward polar residues. A disordered region spans residues M1–M24. The Carrier 1 domain occupies P19 to L95. S56 is subject to O-(pantetheine 4'-phosphoryl)serine. 2 condensation regions span residues Q142–Q570 and P178–L571. The interval D591–R984 is adenylation 1. One can recognise a Carrier 2 domain in the interval R1120–E1197. Position 1158 is an O-(pantetheine 4'-phosphoryl)serine (S1158). Condensation stretches follow at residues F1210–S1654 and V1689–T2125. Residues D2171–R2551 form an adenylation 2 region. The Carrier 3 domain maps to L2684–S2762. S2721 bears the O-(pantetheine 4'-phosphoryl)serine mark. Residues V2811 to S3203 form a condensation 4 region. Positions S3255 to R3647 are adenylation 3. The 75-residue stretch at T3783–A3857 folds into the Carrier 4 domain. Condensation stretches follow at residues E3869–C4296 and E4340–G4757.

This sequence belongs to the nrps family.

The protein operates within secondary metabolite biosynthesis. Its function is as follows. Nonribosomal peptide synthetase; part of the gene cluster that mediates the biosynthesis of beauveriolides I and III, cyclodepsipeptides acting as inhibitors of the acyl-CoA:cholesterol acyltransferase. The HR-PKS cm3B initiates the biosynthesis of beauveriolides by iteratively catalyzing the formation of the linear polyketide chain. The ATP-dependent acetyl-CoA ligase cm3D converts the polyketide carboxylic acid to a CoA thioester which id shuttled to the first T domain in the NRPS cm3A by the acetyltransferase cm3C. Cm3A contains 13 domains and assembles the polyketide chain, L-phenylalanine, L-alanine, and D-leucine (or D-allo-isoleucine) to form beauveriolide I (or beauveriolide III). The production of both beauveriolides I and III suggests the substrate adaptability of cm3B, using different amino acids as substrates. The protein is Nonribosomal peptide synthetase cm3A of Cordyceps militaris (strain CM01) (Caterpillar fungus).